Reading from the N-terminus, the 198-residue chain is Recombination protein RecR (198 aa).

A C4-type zinc finger spans residues 57 to 72 (CSVCGHITENDPCYIC). Residues 80–175 (SVICVVEDDK…KVTRLAQGLS (96 aa)) form the Toprim domain.

Belongs to the RecR family.

In terms of biological role, may play a role in DNA repair. It seems to be involved in an RecBC-independent recombinational process of DNA repair. It may act with RecF and RecO. This is Recombination protein RecR from Staphylococcus aureus (strain JH1).